A 1183-amino-acid chain; its full sequence is DNA-directed RNA polymerase subunit beta (1183 aa).

This sequence belongs to the RNA polymerase beta chain family. The RNAP catalytic core consists of 2 alpha, 1 beta, 1 beta' and 1 omega subunit. When a sigma factor is associated with the core the holoenzyme is formed, which can initiate transcription.

It catalyses the reaction RNA(n) + a ribonucleoside 5'-triphosphate = RNA(n+1) + diphosphate. Its function is as follows. DNA-dependent RNA polymerase catalyzes the transcription of DNA into RNA using the four ribonucleoside triphosphates as substrates. The polypeptide is DNA-directed RNA polymerase subunit beta (Staphylococcus aureus (strain COL)).